Reading from the N-terminus, the 1279-residue chain is Cellulose synthase operon protein C (1279 aa).

The N-terminal stretch at 1-21 is a signal peptide; that stretch reads MRRHTLAIAILAALASTASVA. 10 TPR repeats span residues 27 to 60, 62 to 94, 218 to 250, 306 to 339, 384 to 417, 460 to 493, 495 to 527, 606 to 639, 719 to 752, and 787 to 820; these read QSLL…SPDQ, DALY…SPVP, ADET…HPDD, VDAL…PGGA, PGAA…HPGD, ALRA…DPEN, WTRF…QPNQ, PERV…NPNP, ALGV…NPNN, and PEIL…ENAM.

It functions in the pathway glycan metabolism; bacterial cellulose biosynthesis. Required for maximal bacterial cellulose synthesis. This Pseudomonas fluorescens (strain SBW25) protein is Cellulose synthase operon protein C (bscS).